Reading from the N-terminus, the 89-residue chain is Cell division topological specificity factor (89 aa).

Belongs to the MinE family.

Prevents the cell division inhibition by proteins MinC and MinD at internal division sites while permitting inhibition at polar sites. This ensures cell division at the proper site by restricting the formation of a division septum at the midpoint of the long axis of the cell. This is Cell division topological specificity factor from Pectobacterium atrosepticum (strain SCRI 1043 / ATCC BAA-672) (Erwinia carotovora subsp. atroseptica).